Here is a 74-residue protein sequence, read N- to C-terminus: ATP synthase subunit c (74 aa).

Transmembrane regions (helical) follow at residues 8–28 and 52–72; these read FIGI…VSNI and IGAG…MLLI.

The protein belongs to the ATPase C chain family. F-type ATPases have 2 components, F(1) - the catalytic core - and F(0) - the membrane proton channel. F(1) has five subunits: alpha(3), beta(3), gamma(1), delta(1), epsilon(1). F(0) has three main subunits: a(1), b(2) and c(10-14). The alpha and beta chains form an alternating ring which encloses part of the gamma chain. F(1) is attached to F(0) by a central stalk formed by the gamma and epsilon chains, while a peripheral stalk is formed by the delta and b chains.

Its subcellular location is the cell inner membrane. F(1)F(0) ATP synthase produces ATP from ADP in the presence of a proton or sodium gradient. F-type ATPases consist of two structural domains, F(1) containing the extramembraneous catalytic core and F(0) containing the membrane proton channel, linked together by a central stalk and a peripheral stalk. During catalysis, ATP synthesis in the catalytic domain of F(1) is coupled via a rotary mechanism of the central stalk subunits to proton translocation. Functionally, key component of the F(0) channel; it plays a direct role in translocation across the membrane. A homomeric c-ring of between 10-14 subunits forms the central stalk rotor element with the F(1) delta and epsilon subunits. This is ATP synthase subunit c from Rickettsia akari (strain Hartford).